The chain runs to 673 residues: UvrABC system protein B (673 aa).

The Helicase ATP-binding domain occupies 26 to 183 (EGLEDGLAHQ…RRLAELQYTR (158 aa)). An ATP-binding site is contributed by 39 to 46 (GVTGSGKT). Positions 92 to 115 (YYDYYQPEAYVPSSDTFIEKDASV) match the Beta-hairpin motif. In terms of domain architecture, Helicase C-terminal spans 431–597 (QVDDLLSEIR…GLNKKVVDIL (167 aa)). Residues 633–668 (QQKIHELEGQMMQHAQNLEFEEAAQIRDQLHQLREL) form the UVR domain.

It belongs to the UvrB family. In terms of assembly, forms a heterotetramer with UvrA during the search for lesions. Interacts with UvrC in an incision complex.

The protein resides in the cytoplasm. The UvrABC repair system catalyzes the recognition and processing of DNA lesions. A damage recognition complex composed of 2 UvrA and 2 UvrB subunits scans DNA for abnormalities. Upon binding of the UvrA(2)B(2) complex to a putative damaged site, the DNA wraps around one UvrB monomer. DNA wrap is dependent on ATP binding by UvrB and probably causes local melting of the DNA helix, facilitating insertion of UvrB beta-hairpin between the DNA strands. Then UvrB probes one DNA strand for the presence of a lesion. If a lesion is found the UvrA subunits dissociate and the UvrB-DNA preincision complex is formed. This complex is subsequently bound by UvrC and the second UvrB is released. If no lesion is found, the DNA wraps around the other UvrB subunit that will check the other stand for damage. The polypeptide is UvrABC system protein B (Salmonella agona (strain SL483)).